A 205-amino-acid polypeptide reads, in one-letter code: Casparian strip membrane protein 4 (205 aa).

At 1–58 (MDIEKTGSRREEEEPIVQKPKLEKGKGKAHVFAPPMNYSRIMEKHKQEKVSMAGWKRG) the chain is on the cytoplasmic side. A helical transmembrane segment spans residues 59 to 79 (VAIFDFVLRLIAAITAMAAAA). Over 80–109 (KMATTEETLPFFTQFLQFSADYTDLPTLSS) the chain is Extracellular. A helical membrane pass occupies residues 110–130 (FVIVNSIVGGYLTLSLPFSIV). Over 131-148 (CILRPLAVPPRLFLILCD) the chain is Cytoplasmic. A helical membrane pass occupies residues 149–169 (TAMMGLTMVAASASAAIVYLA). At 170 to 205 (HNGNSSSNWLPVCQQFGDFCKERVAPWWLPLLQRLF) the chain is on the extracellular side. Asparagine 173 carries an N-linked (GlcNAc...) asparagine glycan.

It belongs to the Casparian strip membrane proteins (CASP) family. Homodimer and heterodimers.

Its subcellular location is the cell membrane. In terms of biological role, regulates membrane-cell wall junctions and localized cell wall deposition. Required for establishment of the Casparian strip membrane domain (CSD) and the subsequent formation of Casparian strips, a cell wall modification of the root endodermis that determines an apoplastic barrier between the intraorganismal apoplasm and the extraorganismal apoplasm and prevents lateral diffusion. In Raphanus sativus (Radish), this protein is Casparian strip membrane protein 4.